Consider the following 209-residue polypeptide: High frequency lysogenization protein HflD homolog (209 aa).

It belongs to the HflD family.

The protein resides in the cytoplasm. It is found in the cell inner membrane. This Halorhodospira halophila (strain DSM 244 / SL1) (Ectothiorhodospira halophila (strain DSM 244 / SL1)) protein is High frequency lysogenization protein HflD homolog.